We begin with the raw amino-acid sequence, 721 residues long: Methionine--tRNA ligase (721 aa).

The short motif at P27–H37 is the 'HIGH' region element. C158, C161, C171, and C174 together coordinate Zn(2+). The 'KMSKS' region signature appears at K348–S352. K351 lines the ATP pocket. Residues D615–K721 enclose the tRNA-binding domain.

It belongs to the class-I aminoacyl-tRNA synthetase family. MetG type 1 subfamily. In terms of assembly, homodimer. It depends on Zn(2+) as a cofactor.

The protein localises to the cytoplasm. It carries out the reaction tRNA(Met) + L-methionine + ATP = L-methionyl-tRNA(Met) + AMP + diphosphate. Is required not only for elongation of protein synthesis but also for the initiation of all mRNA translation through initiator tRNA(fMet) aminoacylation. The protein is Methionine--tRNA ligase of Burkholderia vietnamiensis (strain G4 / LMG 22486) (Burkholderia cepacia (strain R1808)).